We begin with the raw amino-acid sequence, 906 residues long: MCRIAGAPRTLLPLLAALLQASVEASGEIALCKTGFPEDVYSAVLSKDVHEGQPLLSVKFSNCNGKRKVQYESSEPADFKVDEDGMVYAVRSFPLSSEHSKFLIYAQDKETQEKWQVAVKLSLKPTLTEESVKESPEIEEIVFPRQLTKHNGYLQRQKRDWVIPPINLPENSRGPFPQELVRIRSDRDKNLSLRYSVTGPGADQPPTGIFIINPISGQLSVTKPLDRELIARFHLRAHAVDINGNQVENPIDIVINVIDMNDNRPEFLHQVWNGTVPEGSKPGTYVMTVTAIDADDPNALNGMLRYRILSQAPSTPSPNMFTINNETGDIITVAAGLDREKVQQYTLIIQATDMEGNPTYGLSNTATAIITVTDVNDNPPEFTAMTFYGEVPENRVDVIVANLTVTDKDQPHTQAWNAVYRISGGDPAGRFAIQTDPNSNDGLVTVVKPIDFETNRMFVLTVAAENQVPLAKGIQHPPQSTATVSVTVIDVNENPYFAPNPKIIRQEEGLHSGTMLTTFTAQDPDRYMQQNIRYTKLSDPANWLKIDPVNGQITTIAVLDRESPNVKNNIYNATFLASDNGIPPMSGTGTLQIYLLDINDNAPQVLPQEAETCETPDPNSINITALDYDIDPNAGPFAFDLPLSPGTIKRNWTITRLNGDFAQLNLKIKFLEAGIYEVPIIITDSGNPPKSNISILRVKVCQCDSNGDCTDVDRIVGAGLGTGAIIAILLCIIILLILVLMFVVWMKRRDKERQAKQLLIDPEDDVRDNILKYDEEGGGEEDQDYDLSQLQQPDTVEPDAIKPVGIRRLDERPIHAEPQYPVRSAAPHPGDIGDFINEGLKAADNDPTAPPYDSLLVFDYEGSGSTAGSLSSLNSSSSGGEQDYDYLNDWGPRFKKLAEMYGGGDD.

Residues 1-25 (MCRIAGAPRTLLPLLAALLQASVEA) form the signal peptide. The propeptide occupies 26 to 159 (SGEIALCKTG…HNGYLQRQKR (134 aa)). Phosphoserine occurs at positions 96 and 135. 5 consecutive Cadherin domains span residues 160–267 (DWVI…RPEF), 268–382 (LHQV…PPEF), 383–497 (TAMT…NPYF), 498–603 (APNP…DNAP), and 604–714 (QVLP…DVDR). Over 160–724 (DWVIPPINLP…IVGAGLGTGA (565 aa)) the chain is Extracellular. Glu170 lines the Ca(2+) pocket. Asn190 carries an N-linked (GlcNAc...) asparagine glycan. Ca(2+)-binding residues include Asp226, Glu228, Asp259, Met260, Asn261, Asp262, and Asn263. Residue Asn273 is glycosylated (N-linked (GlcNAc...) asparagine). The Ca(2+) site is built by Asp293, Asp295, and Asn301. Asn325 is a glycosylation site (N-linked (GlcNAc...) asparagine). Asp353 contacts Ca(2+). 5 N-linked (GlcNAc...) asparagine glycosylation sites follow: Asn402, Asn572, Asn622, Asn651, and Asn692. Residues 725 to 745 (IIAILLCIIILLILVLMFVVW) traverse the membrane as a helical segment. Residues 746–906 (MKRRDKERQA…LAEMYGGGDD (161 aa)) are Cytoplasmic-facing. The segment covering 863 to 880 (SGSTAGSLSSLNSSSSGG) has biased composition (low complexity). Residues 863–884 (SGSTAGSLSSLNSSSSGGEQDY) form a disordered region.

In terms of assembly, homodimer (via extracellular region). Can also form heterodimers with other cadherins (via extracellular region). Dimerization occurs in trans, i.e. with a cadherin chain from another cell. Interacts with CDCP1. Interacts with PCDH8; this complex may also include TAOK2. The interaction with PCDH8 may lead to internalization through TAOK2/p38 MAPK pathway. Identified in a complex containing FGFR4, NCAM1, CDH2, PLCG1, FRS2, SRC, SHC1, GAP43 and CTTN. May interact with OBSCN (via protein kinase domain 2). Interacts with FBXO45. Post-translationally, cleaved by MMP24. Ectodomain cleavage leads to the generation of a soluble 90 kDa N-terminal soluble fragment and a 45 kDa membrane-bound C-terminal fragment 1 (CTF1), which is further cleaved by gamma-secretase into a 35 kDa. Cleavage in neural stem cells by MMP24 affects CDH2-mediated anchorage of neural stem cells to ependymocytes in the adult subependymal zone, leading to modulate neural stem cell quiescence. May be phosphorylated by OBSCN.

The protein localises to the cell membrane. It is found in the sarcolemma. Its subcellular location is the cell junction. The protein resides in the cell surface. It localises to the desmosome. The protein localises to the adherens junction. Calcium-dependent cell adhesion protein; preferentially mediates homotypic cell-cell adhesion by dimerization with a CDH2 chain from another cell. Cadherins may thus contribute to the sorting of heterogeneous cell types. Acts as a regulator of neural stem cells quiescence by mediating anchorage of neural stem cells to ependymocytes in the adult subependymal zone: upon cleavage by MMP24, CDH2-mediated anchorage is affected, leading to modulate neural stem cell quiescence. Plays a role in cell-to-cell junction formation between pancreatic beta cells and neural crest stem (NCS) cells, promoting the formation of processes by NCS cells. Required for proper neurite branching. Required for pre- and postsynaptic organization. CDH2 may be involved in neuronal recognition mechanism. In hippocampal neurons, may regulate dendritic spine density. This is Cadherin-2 (CDH2) from Otolemur garnettii (Small-eared galago).